Consider the following 578-residue polypeptide: MPGSTWELHLLLLLGLGLGSEQALPPPCESQIYCHGELLHQVQMARLYPDDKQFVDMPLSTAPDQVLQSFAELAATYNNTVPREQLEKFVQEHFQAVGQELESWTPGDWKESPQFLQKISDPKLRAWAEQLHLLWKKLGKKIKPEVLSQPERFSLIYSQHPFIVPGGRFVEFYYWDSYWVMEGLLLSEMAETVKGMLQNFLDLVTAYGHIPNGGRVYYLQRSQPPLLTLMMDRYVAHTGDLAFLRENIETLALELDFWAENRTISVSSGGNSHTLNRYHVPYGGPRPESYSKDTELAHTLPEGSWETLWAELKAGAESGWDFSSRWLVGSPNPDSLGSIRTSKLVPVDLNAFLCQAEELLSGFYSRLGNESQATKYRNLRAQRIAALTALLWDEDKGAWFDYDLENQKKNHEFYPSNLTPLWAGCFSDPAIADKALQYLQDSQILNHRHGIPTSLQNTGQQWDFPNAWAPLQDLVIRGLAKSPSARTQEVAFQLAQNWIRTNFDVYSQRSAMYEKYDISNAQPGGGGEYEVQEGFGWTNGVALMLLDRYGDRLSSGTQLALLEPHCLAAALLLSFLTR.

The first 19 residues, Met-1–Gly-19, serve as a signal peptide directing secretion. N-linked (GlcNAc...) asparagine glycosylation occurs at Asn-78. Residues Arg-168, Trp-175–Asp-176, Asn-212, and Arg-221–Gln-223 each bind substrate. A glycan (N-linked (GlcNAc...) asparagine) is linked at Asn-261. Residues Arg-286 to Glu-288 and Gly-319 contribute to the substrate site. The active-site Proton donor/acceptor is the Asp-321. N-linked (GlcNAc...) asparagine glycosylation is present at Asn-369. Glu-514 (proton donor/acceptor) is an active-site residue. Glu-528 is a binding site for substrate. The GPI-anchor amidated serine moiety is linked to residue Ser-555. Residues Gly-556 to Arg-578 constitute a propeptide, removed in mature form.

It belongs to the glycosyl hydrolase 37 family. As to quaternary structure, homodimer; disulfide-linked. In terms of tissue distribution, expressed in small intestine, kidney, and to a lesser extent in liver.

The protein resides in the cell membrane. It carries out the reaction alpha,alpha-trehalose + H2O = alpha-D-glucose + beta-D-glucose. Functionally, intestinal trehalase is probably involved in the hydrolysis of ingested trehalose. The protein is Trehalase (TREH) of Oryctolagus cuniculus (Rabbit).